A 288-amino-acid polypeptide reads, in one-letter code: MNWISNVVPPKVRSFLRRETPENLWVKCPESGELVFHKDLEANLFVVPGSGYHMRLSPKARLANLFDEGIYEDLPTPEAPVDPLKFRDVKRYTDRLKEYRAKTEAQDCVKLAAGRLEGMEIVAAIQDFDFLAGSLGMAAGEAIITGMTTALNRRAPFIIFTASGGARMQEGIFSLMQMPRTTIAVQRLREANLPYIVVLTNPTTGGVTASYAMLGDIHIAEPGAVIGFAGPRVIEQTIRERLPEGFQRAEYLESHGMIDMVVQRQDMRATLARLCSILTRTPRASEAA.

A CoA carboxyltransferase N-terminal domain is found at 24 to 288 (LWVKCPESGE…TRTPRASEAA (265 aa)).

Belongs to the AccD/PCCB family. As to quaternary structure, acetyl-CoA carboxylase is a heterohexamer composed of biotin carboxyl carrier protein (AccB), biotin carboxylase (AccC) and two subunits each of ACCase subunit alpha (AccA) and ACCase subunit beta (AccD).

It localises to the cytoplasm. The catalysed reaction is N(6)-carboxybiotinyl-L-lysyl-[protein] + acetyl-CoA = N(6)-biotinyl-L-lysyl-[protein] + malonyl-CoA. It functions in the pathway lipid metabolism; malonyl-CoA biosynthesis; malonyl-CoA from acetyl-CoA: step 1/1. Component of the acetyl coenzyme A carboxylase (ACC) complex. Biotin carboxylase (BC) catalyzes the carboxylation of biotin on its carrier protein (BCCP) and then the CO(2) group is transferred by the transcarboxylase to acetyl-CoA to form malonyl-CoA. This is Acetyl-coenzyme A carboxylase carboxyl transferase subunit beta from Methylocella silvestris (strain DSM 15510 / CIP 108128 / LMG 27833 / NCIMB 13906 / BL2).